The primary structure comprises 533 residues: Probable galacturonosyltransferase 13 (533 aa).

Residues 1-40 (MQLHISPSMRSITISSSNEFIDLMKIKVAARHISYRTLFH) lie on the Cytoplasmic side of the membrane. The helical; Signal-anchor for type II membrane protein transmembrane segment at 41 to 61 (TILILAFLLPFVFILTAVVTL) threads the bilayer. Topologically, residues 62–533 (EGVNKCSSFD…DFIKNCHILE (472 aa)) are lumenal. N306, N396, N445, and N520 each carry an N-linked (GlcNAc...) asparagine glycan.

Belongs to the glycosyltransferase 8 family. In terms of tissue distribution, expressed in roots, inflorescences, siliques, leaves and stems. Accumulates in pollen grains.

The protein resides in the golgi apparatus membrane. The protein operates within glycan metabolism; pectin biosynthesis. In terms of biological role, may be involved in pectin and/or xylans biosynthesis in cell walls. Together with GAUT14, required for pollen tube growth, possibly through the regulation of pectin biosynthesis and repartition in the pollen tube wall. The polypeptide is Probable galacturonosyltransferase 13 (Arabidopsis thaliana (Mouse-ear cress)).